Here is a 461-residue protein sequence, read N- to C-terminus: Cysteine--tRNA ligase (461 aa).

Residue cysteine 28 participates in Zn(2+) binding. The short motif at 30 to 40 is the 'HIGH' region element; that stretch reads ITVYDLCHIGH. Zn(2+)-binding residues include cysteine 209, histidine 234, and glutamate 238. A 'KMSKS' region motif is present at residues 266-270; sequence KMSKS. Lysine 269 lines the ATP pocket.

Belongs to the class-I aminoacyl-tRNA synthetase family. Monomer. It depends on Zn(2+) as a cofactor.

It localises to the cytoplasm. The catalysed reaction is tRNA(Cys) + L-cysteine + ATP = L-cysteinyl-tRNA(Cys) + AMP + diphosphate. The chain is Cysteine--tRNA ligase from Escherichia coli O127:H6 (strain E2348/69 / EPEC).